The chain runs to 347 residues: Mitochondrial genome maintenance exonuclease 1 (347 aa).

Residues Asp-246, Asp-259, and Lys-261 contribute to the active site.

Belongs to the MGME1 family.

It is found in the mitochondrion. Single-stranded DNA (ssDNA) metal-dependent exonuclease involved in mitochondrial genome maintenance. Has preference for 5'-3' exonuclease activity. Necessary for maintenance of proper 7S DNA levels. Probably involved in mitochondrial DNA (mtDNA) repair. Specifically binds 5-hydroxymethylcytosine (5hmC)-containing DNA in stem cells. The protein is Mitochondrial genome maintenance exonuclease 1 (mgme1) of Xenopus tropicalis (Western clawed frog).